The chain runs to 288 residues: NAD kinase (288 aa).

The active-site Proton acceptor is Asp73. Residues Asp73–Gly74, Arg78, Asn144–Glu145, Asp174, Thr185–Ser190, and Ala209 each bind NAD(+).

This sequence belongs to the NAD kinase family. A divalent metal cation is required as a cofactor.

The protein localises to the cytoplasm. It carries out the reaction NAD(+) + ATP = ADP + NADP(+) + H(+). In terms of biological role, involved in the regulation of the intracellular balance of NAD and NADP, and is a key enzyme in the biosynthesis of NADP. Catalyzes specifically the phosphorylation on 2'-hydroxyl of the adenosine moiety of NAD to yield NADP. This Porphyromonas gingivalis (strain ATCC 33277 / DSM 20709 / CIP 103683 / JCM 12257 / NCTC 11834 / 2561) protein is NAD kinase.